We begin with the raw amino-acid sequence, 126 residues long: Anti-adapter protein IraD (126 aa).

Belongs to the GpW/Gp25 family. IraD subfamily. Interacts with RssB.

The protein localises to the cytoplasm. Functionally, inhibits RpoS proteolysis by regulating RssB activity, thereby increasing the stability of the sigma stress factor RpoS during oxidative stress. Its effect on RpoS stability is due to its interaction with RssB, which probably blocks the interaction of RssB with RpoS, and the consequent delivery of the RssB-RpoS complex to the ClpXP protein degradation pathway. The chain is Anti-adapter protein IraD from Salmonella arizonae (strain ATCC BAA-731 / CDC346-86 / RSK2980).